The following is a 95-amino-acid chain: Beta-defensin 132 (95 aa).

The first 22 residues, 1 to 22 (MKFLLLVLAALGFLTQVIPASG), serve as a signal peptide directing secretion. Cystine bridges form between Cys27/Cys55, Cys35/Cys49, and Cys39/Cys56. A disordered region spans residues 72-95 (GNHWPSRSRNTQRKNKKQQTTVTP).

It belongs to the beta-defensin family.

The protein localises to the secreted. Functionally, has antibacterial activity. The sequence is that of Beta-defensin 132 (DEFB132) from Macaca fascicularis (Crab-eating macaque).